The following is a 188-amino-acid chain: FUN14 domain-containing protein 1B (188 aa).

Residues 21–41 (VVNIDGNIFSIYVCFFVCFFF) form a helical membrane-spanning segment. The short motif at 52-55 (YEVL) is the YXXL element. 3 consecutive transmembrane segments (helical) span residues 82 to 102 (YSVA…GFLF), 109 to 129 (AATA…GGYI), and 167 to 187 (FFKK…IGLA).

This sequence belongs to the FUN14 family.

It is found in the mitochondrion outer membrane. Acts as an activator of hypoxia-induced mitophagy, an important mechanism for mitochondrial quality control. This Xenopus laevis (African clawed frog) protein is FUN14 domain-containing protein 1B (fundc1-b).